The primary structure comprises 420 residues: CinA-like protein (420 aa).

It belongs to the CinA family.

The sequence is that of CinA-like protein from Syntrophus aciditrophicus (strain SB).